The primary structure comprises 117 residues: Immunoglobulin kappa variable 1-9 (117 aa).

The first 22 residues, 1–22 (MDMRVPAQLLGLLLLWLPGARC), serve as a signal peptide directing secretion. A framework-1 region spans residues 23 to 45 (DIQLTQSPSFLSASVGDRVTITC). Positions 24 to 117 (IQLTQSPSFL…YYCQQLNSYP (94 aa)) constitute an Ig-like domain. Residues cysteine 45 and cysteine 110 are joined by a disulfide bond. Residues 46-56 (RASQGISSYLA) form a complementarity-determining-1 region. The framework-2 stretch occupies residues 57–71 (WYQQKPGKAPKLLIY). Residues 72 to 78 (AASTLQS) are complementarity-determining-2. Positions 79–110 (GVPSRFSGSGSGTEFTLTISSLQPEDFATYYC) are framework-3. The interval 111-117 (QQLNSYP) is complementarity-determining-3.

In terms of assembly, immunoglobulins are composed of two identical heavy chains and two identical light chains; disulfide-linked.

The protein resides in the secreted. It is found in the cell membrane. V region of the variable domain of immunoglobulin light chains that participates in the antigen recognition. Immunoglobulins, also known as antibodies, are membrane-bound or secreted glycoproteins produced by B lymphocytes. In the recognition phase of humoral immunity, the membrane-bound immunoglobulins serve as receptors which, upon binding of a specific antigen, trigger the clonal expansion and differentiation of B lymphocytes into immunoglobulins-secreting plasma cells. Secreted immunoglobulins mediate the effector phase of humoral immunity, which results in the elimination of bound antigens. The antigen binding site is formed by the variable domain of one heavy chain, together with that of its associated light chain. Thus, each immunoglobulin has two antigen binding sites with remarkable affinity for a particular antigen. The variable domains are assembled by a process called V-(D)-J rearrangement and can then be subjected to somatic hypermutations which, after exposure to antigen and selection, allow affinity maturation for a particular antigen. The sequence is that of Immunoglobulin kappa variable 1-9 from Homo sapiens (Human).